The chain runs to 280 residues: Urease accessory protein UreD 1 (280 aa).

Belongs to the UreD family. In terms of assembly, ureD, UreF and UreG form a complex that acts as a GTP-hydrolysis-dependent molecular chaperone, activating the urease apoprotein by helping to assemble the nickel containing metallocenter of UreC. The UreE protein probably delivers the nickel.

The protein localises to the cytoplasm. Functionally, required for maturation of urease via the functional incorporation of the urease nickel metallocenter. The protein is Urease accessory protein UreD 1 of Brucella melitensis biotype 1 (strain ATCC 23456 / CCUG 17765 / NCTC 10094 / 16M).